A 140-amino-acid chain; its full sequence is Sex-regulated protein janus-B (140 aa).

Arg42 contributes to the substrate binding site. His69 acts as the Proton acceptor in catalysis. Position 110-112 (Ser110–Thr112) interacts with substrate.

The protein belongs to the janus family.

Functionally, janA and janB regulate somatic sex differentiation. In Drosophila sechellia (Fruit fly), this protein is Sex-regulated protein janus-B (janB).